A 191-amino-acid polypeptide reads, in one-letter code: Peptidyl-tRNA hydrolase (191 aa).

Position 14 (Y14) interacts with tRNA. H19 (proton acceptor) is an active-site residue. Residues Y64, N66, and N112 each contribute to the tRNA site.

This sequence belongs to the PTH family. In terms of assembly, monomer.

The protein resides in the cytoplasm. The catalysed reaction is an N-acyl-L-alpha-aminoacyl-tRNA + H2O = an N-acyl-L-amino acid + a tRNA + H(+). Its function is as follows. Hydrolyzes ribosome-free peptidyl-tRNAs (with 1 or more amino acids incorporated), which drop off the ribosome during protein synthesis, or as a result of ribosome stalling. Catalyzes the release of premature peptidyl moieties from peptidyl-tRNA molecules trapped in stalled 50S ribosomal subunits, and thus maintains levels of free tRNAs and 50S ribosomes. The sequence is that of Peptidyl-tRNA hydrolase from Syntrophotalea carbinolica (strain DSM 2380 / NBRC 103641 / GraBd1) (Pelobacter carbinolicus).